The following is a 152-amino-acid chain: Protein SprT-like (152 aa).

Residues 7–148 (QRLVEEVSLQ…GKCKGKLILI (142 aa)) enclose the SprT-like domain. H67 provides a ligand contact to Zn(2+). Residue E68 is part of the active site. H71 serves as a coordination point for Zn(2+).

The protein belongs to the SprT family. It depends on Zn(2+) as a cofactor.

The protein localises to the cytoplasm. This is Protein SprT-like from Bacillus cereus (strain AH187).